The chain runs to 101 residues: Olivetolic acid cyclase (101 aa).

In terms of domain architecture, Stress-response A/B barrel spans 3–97; that stretch reads VKHLIVLKFK…FWEKLLIFDY (95 aa). A 3,5,7-trioxododecanoyl-CoA-binding site is contributed by His-5. Mg(2+)-binding residues include Val-31, Ile-34, and Met-37. A 3,5,7-trioxododecanoyl-CoA-binding site is contributed by Tyr-72. Active-site acid/base catalyst residues include Tyr-72 and His-75.

In terms of assembly, homodimer. Expressed in glandular trichomes and at lower levels in female flowers.

The protein localises to the cytoplasm. The catalysed reaction is 3,5,7-trioxododecanoyl-CoA = olivetolate + CoA + H(+). It participates in secondary metabolite biosynthesis; terpenoid biosynthesis. Functionally, involved in the biosynthesis of cannabinoids-related terpenophenolic natural products, which have pharmacological activity. Polyketide cyclase which functions in concert with OLS/TKS to form olivetolic acid. Has no intrinsic polyketide synthase activity and requires the presence of OLS to produce olivetolic acid. The polypeptide is Olivetolic acid cyclase (Cannabis sativa (Hemp)).